The primary structure comprises 349 residues: N-acetyltaurine hydrolase (349 aa).

A divalent metal cation contacts are provided by H26, H28, E169, H201, H230, and D298.

This sequence belongs to the metallo-dependent hydrolases superfamily. Phosphotriesterase family. A divalent metal cation is required as a cofactor. Expressed in the kidney, liver and brainstem.

It is found in the cytoplasm. Its subcellular location is the cytosol. The catalysed reaction is N-acetyltaurine + H2O = taurine + acetate. The enzyme catalyses N-propanoyltaurine + H2O = propanoate + taurine. It carries out the reaction N-acetyl-L-methionine + H2O = L-methionine + acetate. It catalyses the reaction N-acetyl-L-isoleucine + H2O = L-isoleucine + acetate. The catalysed reaction is N-acetyl-L-leucine + H2O = L-leucine + acetate. The enzyme catalyses N-acetyl-L-valine + H2O = L-valine + acetate. Functionally, N-acetyltaurine hydrolase that regulates feeding by catalyzing the hydrolysis of N-acetyltaurine into taurine and acetate. N-acetyltaurine has anorexigenic and anti-obesity effects that are dependent on GFRAL receptor and GDF15. PTER also acts on other N-acetyl amino acids (Met, Ile, Leu, Val) and N-propionyltaurine, but at lower rates. This is N-acetyltaurine hydrolase from Mus musculus (Mouse).